Reading from the N-terminus, the 257-residue chain is Lysine-rich coiled-coil protein 1 (257 aa).

The interval 145 to 257 is disordered; it reads NTSAHQASYK…MLWDQSILGF (113 aa). The segment covering 152-162 has biased composition (basic residues); sequence SYKHIHQKRKR. Composition is skewed to basic and acidic residues over residues 163–176, 183–193, 200–212, and 219–228; these read HTEE…EERP, ACEEIDLDKYK, TEAE…TEKL, and RSRDVASKKE. Positions 210–248 form a coiled coil; it reads EKLKNRKEKRSRDVASKKEERKRRKEKKEQGQERTEEEM.

In Bos taurus (Bovine), this protein is Lysine-rich coiled-coil protein 1 (KRCC1).